We begin with the raw amino-acid sequence, 370 residues long: Chloromuconate cycloisomerase (370 aa).

The Proton acceptor role is filled by K165. Residues D194, E220, and D245 each contribute to the Mn(2+) site. The Proton donor role is filled by E323.

This sequence belongs to the mandelate racemase/muconate lactonizing enzyme family. Mn(2+) serves as cofactor.

It carries out the reaction 2-[(2R)-2-chloro-2,5-dihydro-5-oxofuryl]acetate = 3-chloro-cis,cis-muconate + H(+). The protein operates within aromatic compound metabolism; 3-chlorocatechol degradation. Highly active toward chlorinated substrates but retains diminished activity toward the non-chlorinated substrates. The chain is Chloromuconate cycloisomerase (clcB) from Pseudomonas putida (Arthrobacter siderocapsulatus).